Reading from the N-terminus, the 302-residue chain is Sulfate adenylyltransferase subunit 2 (302 aa).

The disordered stretch occupies residues 280 to 302 (RQGRLIDSDQSASMEQKKRQGYF).

The protein belongs to the PAPS reductase family. CysD subfamily. In terms of assembly, heterodimer composed of CysD, the smaller subunit, and CysN.

The enzyme catalyses sulfate + ATP + H(+) = adenosine 5'-phosphosulfate + diphosphate. It functions in the pathway sulfur metabolism; hydrogen sulfide biosynthesis; sulfite from sulfate: step 1/3. With CysN forms the ATP sulfurylase (ATPS) that catalyzes the adenylation of sulfate producing adenosine 5'-phosphosulfate (APS) and diphosphate, the first enzymatic step in sulfur assimilation pathway. APS synthesis involves the formation of a high-energy phosphoric-sulfuric acid anhydride bond driven by GTP hydrolysis by CysN coupled to ATP hydrolysis by CysD. This chain is Sulfate adenylyltransferase subunit 2, found in Shewanella frigidimarina (strain NCIMB 400).